We begin with the raw amino-acid sequence, 163 residues long: Nucleotide-binding protein BC_1159 (163 aa).

It belongs to the YajQ family.

Nucleotide-binding protein. The chain is Nucleotide-binding protein BC_1159 from Bacillus cereus (strain ATCC 14579 / DSM 31 / CCUG 7414 / JCM 2152 / NBRC 15305 / NCIMB 9373 / NCTC 2599 / NRRL B-3711).